We begin with the raw amino-acid sequence, 440 residues long: Gamma-aminobutyric acid receptor subunit pi (440 aa).

The signal sequence occupies residues 1-23 (MSYSLYLAFVCLNLLAQRMCIQG). At 24 to 241 (NQFNVEVSRS…LVLQFELRRN (218 aa)) the chain is on the extracellular side. Asparagine 43, asparagine 102, and asparagine 145 each carry an N-linked (GlcNAc...) asparagine glycan. The cysteines at positions 160 and 174 are disulfide-linked. 2 N-linked (GlcNAc...) asparagine glycosylation sites follow: asparagine 196 and asparagine 228. Residues 242-262 (VLYFILETYVPSTFLVVLSWV) form a helical membrane-spanning segment. The Cytoplasmic segment spans residues 263 to 270 (SFWISLES). A helical transmembrane segment spans residues 271–290 (VPARTCIGVTTVLSMTTLMI). The Extracellular portion of the chain corresponds to 291–301 (GSRTSLPNTNC). Residues 302-322 (FIKAIDVYLGICFSFVFGALL) traverse the membrane as a helical segment. Residues 323 to 419 (EYAVAHYSSL…NPSNVDRYSK (97 aa)) are Cytoplasmic-facing. The helical transmembrane segment at 420–440 (LLFPLIFMLANVFYWAYYMYF) threads the bilayer.

Belongs to the ligand-gated ion channel (TC 1.A.9) family. Gamma-aminobutyric acid receptor (TC 1.A.9.5) subfamily. GABRP sub-subfamily. Heteropentamer, formed by a combination of alpha (GABRA1-6), beta (GABRB1-3), gamma (GABRG1-3), delta (GABRD), epsilon (GABRE), rho (GABRR1-3), pi (GABRP) and theta (GABRQ) chains, each subunit exhibiting distinct physiological and pharmacological properties. In terms of tissue distribution, expressed in lungs, in alveolar epithelium.

The protein resides in the cell membrane. It is found in the apical cell membrane. It carries out the reaction chloride(in) = chloride(out). In terms of biological role, pi subunit of the heteropentameric ligand-gated chloride channel gated by gamma-aminobutyric acid (GABA). GABA-gated chloride channels, also named GABA(A) receptors (GABAAR), consist of five subunits arranged around a central pore and contain GABA active binding site(s) located at the alpha and beta subunit interfaces. When activated by GABA, GABAARs selectively allow the flow of chloride anions across the cell membrane down their electrochemical gradient. Pi-containing GABAARs are mostly located in peripheral tissues. In the uterus, pi subunits modulate uterus contraction by altering the sensitivity of GABAARs to pregnanolone. In the lungs, pi-containing GABAARs contribute to pulmonary fluid transport via luminal secretion of chloride. The protein is Gamma-aminobutyric acid receptor subunit pi of Rattus norvegicus (Rat).